A 449-amino-acid polypeptide reads, in one-letter code: C4-dicarboxylate transport protein 1 (449 aa).

Helical transmembrane passes span 14 to 34 (SIFL…VGIP), 47 to 67 (FIKL…VNGI), 83 to 103 (SVIY…VVAY), 157 to 177 (ILQV…VGEQ), 195 to 215 (IMGM…AFTT), 226 to 246 (LGAL…AVLG), 312 to 332 (FSIY…TPLA), 359 to 379 (VILA…LVLV), and 385 to 405 (FMGI…TVTI).

Belongs to the dicarboxylate/amino acid:cation symporter (DAACS) (TC 2.A.23) family.

The protein localises to the cell inner membrane. In terms of biological role, responsible for the transport of dicarboxylates such as succinate, fumarate, and malate from the periplasm across the membrane. The sequence is that of C4-dicarboxylate transport protein 1 from Pseudomonas aeruginosa (strain UCBPP-PA14).